Consider the following 705-residue polypeptide: Elongation factor G (705 aa).

Positions 7–287 (HLTRNIGIMA…YVCAFLPSPL (281 aa)) constitute a tr-type G domain. Residues 16–23 (AHIDAGKT), 84–88 (DTPGH), and 138–141 (NKMD) each bind GTP.

It belongs to the TRAFAC class translation factor GTPase superfamily. Classic translation factor GTPase family. EF-G/EF-2 subfamily.

Its subcellular location is the cytoplasm. Catalyzes the GTP-dependent ribosomal translocation step during translation elongation. During this step, the ribosome changes from the pre-translocational (PRE) to the post-translocational (POST) state as the newly formed A-site-bound peptidyl-tRNA and P-site-bound deacylated tRNA move to the P and E sites, respectively. Catalyzes the coordinated movement of the two tRNA molecules, the mRNA and conformational changes in the ribosome. The chain is Elongation factor G from Bacteroides thetaiotaomicron (strain ATCC 29148 / DSM 2079 / JCM 5827 / CCUG 10774 / NCTC 10582 / VPI-5482 / E50).